Here is a 440-residue protein sequence, read N- to C-terminus: Beta-1,3-galactosyl-O-glycosyl-glycoprotein beta-1,6-N-acetylglucosaminyltransferase 3 (440 aa).

Residues 1–12 lie on the Cytoplasmic side of the membrane; that stretch reads MKMTGWKKKLCR. The chain crosses the membrane as a helical; Signal-anchor for type II membrane protein span at residues 13 to 30; the sequence is GHHLWALGCYSLLAVVAL. Topologically, residues 31 to 440 are lumenal; it reads RLSLRLKCDV…RHKAIYGTEL (410 aa). 4 disulfide bridges follow: Cys-73-Cys-230, Cys-164-Cys-384, Cys-185-Cys-212, and Cys-393-Cys-425. An N-linked (GlcNAc...) asparagine glycan is attached at Asn-108.

The protein belongs to the glycosyltransferase 14 family. Post-translationally, N-glycosylated.

Its subcellular location is the golgi apparatus membrane. The catalysed reaction is a 3-O-[beta-D-galactosyl-(1-&gt;3)-N-acetyl-alpha-D-galactosaminyl]-L-seryl-[protein] + UDP-N-acetyl-alpha-D-glucosamine = 3-O-{beta-D-galactosyl-(1-&gt;3)-[N-acetyl-beta-D-glucosaminyl-(1-&gt;6)]-N-acetyl-alpha-D-galactosaminyl}-L-seryl-[protein] + UDP + H(+). It carries out the reaction a 3-O-[beta-D-galactosyl-(1-&gt;3)-N-acetyl-alpha-D-galactosaminyl]-L-threonyl-[protein] + UDP-N-acetyl-alpha-D-glucosamine = a 3-O-{beta-D-galactosyl-(1-&gt;3)-[N-acetyl-beta-D-glucosaminyl-(1-&gt;6)]-N-acetyl-alpha-D-galactosaminyl}-L-threonyl-[protein] + UDP + H(+). The enzyme catalyses a beta-D-Gal-(1-&gt;4)-beta-D-GlcNAc-(1-&gt;3)-beta-D-Gal-(1-&gt;4)-beta-D-GlcNAc derivative + UDP-N-acetyl-alpha-D-glucosamine = a beta-D-Gal-(1-&gt;4)-beta-D-GlcNAc-(1-&gt;3)-[beta-D-GlcNAc-(1-&gt;6)]-beta-D-Gal-(1-&gt;4)-N-acetyl-beta-D-glucosaminyl derivative + UDP + H(+). It catalyses the reaction 3-O-[N-acetyl-beta-D-glucosaminyl-(1-&gt;3)-N-acetyl-alpha-D-galactosaminyl]-L-seryl-[protein] + UDP-N-acetyl-alpha-D-glucosamine = 3-O-[N-acetyl-beta-D-glucosaminyl-(1-&gt;3)-[N-acetyl-beta-D-glucosaminyl-(1-&gt;6)]-N-acetyl-alpha-D-galactosaminyl]-L-seryl-[protein] + UDP + H(+). The catalysed reaction is a 3-O-[N-acetyl-beta-D-glucosaminyl-(1-&gt;3)-N-acetyl-alpha-D-galactosaminyl]-L-threonyl-[protein] + UDP-N-acetyl-alpha-D-glucosamine = 3-O-[N-acetyl-beta-D-glucosaminyl-(1-&gt;3)-[N-acetyl-beta-D-glucosaminyl-(1-&gt;6)]-N-acetyl-alpha-D-galactosaminyl]-L-threonyl-[protein] + UDP + H(+). It participates in protein modification; protein glycosylation. In terms of biological role, glycosyltransferase that can synthesize all known mucin beta 6 N-acetylglucosaminides. Mediates core 2 and core 4 O-glycan branching, 2 important steps in mucin-type biosynthesis. Also has I-branching enzyme activity by converting linear into branched poly-N-acetyllactosaminoglycans, leading to introduce the blood group I antigen during embryonic development. In Bos mutus grunniens (Wild yak), this protein is Beta-1,3-galactosyl-O-glycosyl-glycoprotein beta-1,6-N-acetylglucosaminyltransferase 3 (GCNT3).